A 968-amino-acid chain; its full sequence is RNA polymerase-associated protein RapA (968 aa).

Positions Asp-164–Asn-334 constitute a Helicase ATP-binding domain. Asp-177–Thr-184 serves as a coordination point for ATP. The short motif at Asp-280–His-283 is the DEAH box element. The region spanning Arg-490–Gly-662 is the Helicase C-terminal domain.

It belongs to the SNF2/RAD54 helicase family. RapA subfamily. Interacts with the RNAP. Has a higher affinity for the core RNAP than for the holoenzyme. Its ATPase activity is stimulated by binding to RNAP.

Functionally, transcription regulator that activates transcription by stimulating RNA polymerase (RNAP) recycling in case of stress conditions such as supercoiled DNA or high salt concentrations. Probably acts by releasing the RNAP, when it is trapped or immobilized on tightly supercoiled DNA. Does not activate transcription on linear DNA. Probably not involved in DNA repair. The polypeptide is RNA polymerase-associated protein RapA (Escherichia coli O1:K1 / APEC).